Consider the following 1123-residue polypeptide: Alpha-mannosidase E (1123 aa).

The N-terminal stretch at 1-21 is a signal peptide; the sequence is MNKTKLIKIIFVIGVWILLST. Residues Asn2 and Asn38 are each glycosylated (N-linked (GlcNAc...) asparagine). Topologically, residues 22–1072 are extracellular; that stretch reads FIINIYNENF…KYNRPNHLAL (1051 aa). Residues His67 and Asp69 each contribute to the Zn(2+) site. An N-linked (GlcNAc...) asparagine glycan is attached at Asn140. Zn(2+) is bound by residues Asp150 and His409. Asp150 functions as the Nucleophile in the catalytic mechanism. N-linked (GlcNAc...) asparagine glycans are attached at residues Asn521, Asn675, Asn858, Asn887, Asn975, and Asn990. Residues 1073-1093 traverse the membrane as a helical segment; the sequence is ILSLSIGTPAGILIIVIALVV. Topologically, residues 1094–1123 are cytoplasmic; sequence IYKKRKNRKTLTSSYSLLNLILKDRADSSP.

It belongs to the glycosyl hydrolase 38 family. The cofactor is Zn(2+).

The protein resides in the membrane. The enzyme catalyses Hydrolysis of terminal, non-reducing alpha-D-mannose residues in alpha-D-mannosides.. The sequence is that of Alpha-mannosidase E (manE) from Dictyostelium discoideum (Social amoeba).